Here is a 352-residue protein sequence, read N- to C-terminus: Ion-translocating oxidoreductase complex subunit D (352 aa).

The next 5 helical transmembrane spans lie at 20–40 (IMLL…WFFG), 42–62 (GTLV…ALVL), 78–109 (ALLT…VIIA), 123–143 (PAMI…TSWL), and 148–168 (IAVN…GHTA). Residue Thr187 is modified to FMN phosphoryl threonine. A run of 4 helical transmembrane segments spans residues 214 to 234 (ILAG…GVWL), 242 to 262 (WHIP…GWLF), 267 to 287 (LAAP…FFIL), and 301 to 318 (LMFG…RSFG).

The protein belongs to the NqrB/RnfD family. In terms of assembly, the complex is composed of six subunits: RsxA, RsxB, RsxC, RsxD, RsxE and RsxG. The cofactor is FMN.

The protein localises to the cell inner membrane. Its function is as follows. Part of a membrane-bound complex that couples electron transfer with translocation of ions across the membrane. Required to maintain the reduced state of SoxR. The polypeptide is Ion-translocating oxidoreductase complex subunit D (Shigella flexneri serotype 5b (strain 8401)).